The primary structure comprises 498 residues: Protein DETOXIFICATION 30 (498 aa).

Helical transmembrane passes span 64 to 86, 91 to 111, 136 to 156, 161 to 181, 197 to 217, 227 to 247, 277 to 297, 302 to 322, 349 to 369, 393 to 413, 419 to 439, and 447 to 467; these read YSLGAATQVFAGHISTIALAAVS, VIAGFSFGVMLGMGSALETLC, VTAVILSLLYIFAAPILAFIG, ISSATGIFSIYMIPQIFAYAV, VMAAISAVALVLHVLLTWFVI, LAVVLNASWWFIVVAQLVYIF, AVMLCLEVWYLMAVILFAGYL, ISVAALSICMNILGWTAMIAI, LVAVITSTVIGLAISIALLIF, ILAVSIVINNVQPVLSGVAVG, VVAYVNIVCYYVFGIPFGLLL, and VMGIWCGMLTGTVVQTIVLTW.

This sequence belongs to the multi antimicrobial extrusion (MATE) (TC 2.A.66.1) family.

It is found in the membrane. This Arabidopsis thaliana (Mouse-ear cress) protein is Protein DETOXIFICATION 30.